A 630-amino-acid chain; its full sequence is Threonine--tRNA ligase (630 aa).

The segment at 1–137 (MKVLLIHSDY…PLSELSRKIT (137 aa)) is editing domain. The catalytic stretch occupies residues 207–506 (PHVKFITEKE…ADAGAPPMLP (300 aa)). Cys299, His351, and His475 together coordinate Zn(2+).

The protein belongs to the class-II aminoacyl-tRNA synthetase family. As to quaternary structure, homodimer. Zn(2+) serves as cofactor.

The protein localises to the cytoplasm. The enzyme catalyses tRNA(Thr) + L-threonine + ATP = L-threonyl-tRNA(Thr) + AMP + diphosphate + H(+). In terms of biological role, catalyzes the attachment of threonine to tRNA(Thr) in a two-step reaction: L-threonine is first activated by ATP to form Thr-AMP and then transferred to the acceptor end of tRNA(Thr). Also edits incorrectly charged L-seryl-tRNA(Thr). The protein is Threonine--tRNA ligase of Methanococcus aeolicus (strain ATCC BAA-1280 / DSM 17508 / OCM 812 / Nankai-3).